A 490-amino-acid polypeptide reads, in one-letter code: Bifunctional pantoate ligase/cytidylate kinase (490 aa).

1 to 8 provides a ligand contact to ATP; that stretch reads MGGLHQGH. The interval 1–253 is pantoate--beta-alanine ligase; it reads MGGLHQGHAR…CGETRLIDHV (253 aa). The active-site Proton donor is histidine 8. (R)-pantoate is bound at residue glutamine 35. Residue glutamine 35 participates in beta-alanine binding. An ATP-binding site is contributed by 124 to 127; sequence GEKD. (R)-pantoate is bound at residue glutamine 130. ATP-binding positions include valine 153 and 161–164; that span reads ASSR. Residues 254-490 are cytidylate kinase; sequence FIMTRSPIVA…AKEIWPTPQG (237 aa).

The protein in the N-terminal section; belongs to the pantothenate synthetase family. It in the C-terminal section; belongs to the cytidylate kinase family. Type 1 subfamily.

It is found in the cytoplasm. The catalysed reaction is (R)-pantoate + beta-alanine + ATP = (R)-pantothenate + AMP + diphosphate + H(+). It catalyses the reaction CMP + ATP = CDP + ADP. The enzyme catalyses dCMP + ATP = dCDP + ADP. It participates in cofactor biosynthesis; (R)-pantothenate biosynthesis; (R)-pantothenate from (R)-pantoate and beta-alanine: step 1/1. Catalyzes the condensation of pantoate with beta-alanine in an ATP-dependent reaction via a pantoyl-adenylate intermediate. Its function is as follows. Catalyzes the transfer of a phosphate group from ATP to either CMP or dCMP to form CDP or dCDP and ADP, respectively. In Synechococcus sp. (strain WH7803), this protein is Bifunctional pantoate ligase/cytidylate kinase.